The primary structure comprises 97 residues: MIKLNLSNLQHFAHKKGGGSTSNGRDSQAKRLGAKAADGQTVSGGSILYRQRGTHIYPGVNVGRGGDDTLFAKVEGVVRFERKGRDKKQVSVYPIAK.

Positions 1–12 (MIKLNLSNLQHF) are excised as a propeptide. A disordered region spans residues 13–38 (AHKKGGGSTSNGRDSQAKRLGAKAAD).

This sequence belongs to the bacterial ribosomal protein bL27 family. Post-translationally, the N-terminus is cleaved by ribosomal processing cysteine protease Prp.

The protein is Large ribosomal subunit protein bL27 of Streptococcus equi subsp. equi (strain 4047).